The sequence spans 206 residues: Interleukin-24 (206 aa).

Residues 1-51 form the signal peptide; the sequence is MNFQQRLQSLWTLARPFCPPLLATASQMQMVVLPCLGFTLLLWSQVSGAQG. An intrachain disulfide couples C59 to C106. Residues N85 and N99 are each glycosylated (N-linked (GlcNAc...) asparagine). K122 is covalently cross-linked (Glycyl lysine isopeptide (Lys-Gly) (interchain with G-Cter in ubiquitin)). The N-linked (GlcNAc...) asparagine glycan is linked to N126.

The protein belongs to the IL-10 family. In terms of processing, glycosylated. Ubiquitination at Lys-122 promotes proteasomal degradation. Up-regulated in melanoma cells induced to terminally differentiate.

The protein localises to the secreted. Multifunctional cytokine mainly produced by T-cells that plays a regulatory role in immune response, tissue homeostasis, host defense, and oncogenesis. Possesses antiviral functions and induces the type I interferon response during influenza infection. Signals through two receptor complexes IL20RA/IL20RB or IL20RB/IL22RA1. In turn, stimulates the JAK1-STAT3 and MAPK pathways and promotes the secretion of pro-inflammatory mediators including IL8 and MMP1. Intracellularly, maintains endoplasmic reticulum homeostasis by restricting the eIF2alpha-CHOP pathway-mediated stress signal. In addition, acts as a quality control mechanism for the ubiquitin proteasome system by alerting the cell to proteasome dysfunction through activation of PKR/EIF2AK2. The polypeptide is Interleukin-24 (IL24) (Homo sapiens (Human)).